We begin with the raw amino-acid sequence, 558 residues long: Formate--tetrahydrofolate ligase (558 aa).

Position 66–73 (66–73 (TPAGEGKT)) interacts with ATP.

The protein belongs to the formate--tetrahydrofolate ligase family.

It carries out the reaction (6S)-5,6,7,8-tetrahydrofolate + formate + ATP = (6R)-10-formyltetrahydrofolate + ADP + phosphate. It functions in the pathway one-carbon metabolism; tetrahydrofolate interconversion. The polypeptide is Formate--tetrahydrofolate ligase (Clostridium kluyveri (strain NBRC 12016)).